The following is a 315-amino-acid chain: Methionyl-tRNA formyltransferase (315 aa).

(6S)-5,6,7,8-tetrahydrofolate is bound at residue 112-115; it reads SLLP.

It belongs to the Fmt family.

It catalyses the reaction L-methionyl-tRNA(fMet) + (6R)-10-formyltetrahydrofolate = N-formyl-L-methionyl-tRNA(fMet) + (6S)-5,6,7,8-tetrahydrofolate + H(+). Attaches a formyl group to the free amino group of methionyl-tRNA(fMet). The formyl group appears to play a dual role in the initiator identity of N-formylmethionyl-tRNA by promoting its recognition by IF2 and preventing the misappropriation of this tRNA by the elongation apparatus. This chain is Methionyl-tRNA formyltransferase, found in Rhizobium rhizogenes (strain K84 / ATCC BAA-868) (Agrobacterium radiobacter).